Consider the following 188-residue polypeptide: Accessory gene regulator protein B (188 aa).

A run of 4 helical transmembrane segments spans residues 49 to 69 (VALL…YFFV), 82 to 102 (LLCH…IVHF), 104 to 124 (VSWT…ICYA), and 163 to 183 (YMQL…PIFF).

This sequence belongs to the AgrB family.

It localises to the cell membrane. Functionally, essential for the production of a quorum sensing system signal molecule, the autoinducing peptide (AIP). This quorum sensing system is responsible for the regulation of the expression of virulence factor genes. Involved in the proteolytic processing of AgrD, the precursor of AIP. The protein is Accessory gene regulator protein B of Staphylococcus lugdunensis.